The chain runs to 364 residues: Geranylgeranyl pyrophosphate synthase janG (364 aa).

Isopentenyl diphosphate contacts are provided by Lys83, Arg86, and His115. Asp122 and Asp126 together coordinate Mg(2+). Arg131 contacts dimethylallyl diphosphate. Arg132 is a binding site for isopentenyl diphosphate. Residues Lys209, Thr210, and Gln243 each coordinate dimethylallyl diphosphate. Asp246 contacts Mg(2+). 3 residues coordinate dimethylallyl diphosphate: Asn250, Lys260, and Lys270.

This sequence belongs to the FPP/GGPP synthase family. Mg(2+) serves as cofactor.

It catalyses the reaction isopentenyl diphosphate + dimethylallyl diphosphate = (2E)-geranyl diphosphate + diphosphate. It carries out the reaction isopentenyl diphosphate + (2E)-geranyl diphosphate = (2E,6E)-farnesyl diphosphate + diphosphate. The enzyme catalyses isopentenyl diphosphate + (2E,6E)-farnesyl diphosphate = (2E,6E,10E)-geranylgeranyl diphosphate + diphosphate. Its pathway is secondary metabolite biosynthesis. Its function is as follows. Geranylgeranyl pyrophosphate synthase; part of the gene cluster that mediates the biosynthesis of the indole diterpenes janthitremanes such as shearinine K or shearinine A. The geranylgeranyl diphosphate (GGPP) synthase janG catalyzes the first step in janthitremane biosynthesis via conversion of farnesyl pyrophosphate and isopentyl pyrophosphate into geranylgeranyl pyrophosphate (GGPP). Condensation of indole-3-glycerol phosphate with GGPP by the prenyl transferase janC then forms 3-geranylgeranylindole (3-GGI). Epoxidation by the FAD-dependent monooxygenase janM leads to a epoxidized-GGI that is substrate of the terpene cyclase janB for cyclization to yield paspaline. Paspaline is subsequently converted to 13-desoxypaspaline by the cytochrome P450 monooxygenase janP, via beta-PC-M6 in a series of alpha-face oxidations. The cytochrome P450 monooxygenase janQ is proposed to carry out sequential beta-face oxidation steps at C-7 and C-13 of 13-desoxypaspaline to form paspalicine and paspalinine respectively. The indole diterpene prenyltransferase janD may then convert paspalinine into shearinine K which is substrate of janO and/or additional enzymes for oxidation and cyclization to generate shearinine A. The chain is Geranylgeranyl pyrophosphate synthase janG from Penicillium janthinellum (Penicillium vitale).